A 723-amino-acid chain; its full sequence is Transient receptor potential cation channel subfamily V member 5 (723 aa).

Over 1–320 the chain is Cytoplasmic; sequence MGVKKPWIQL…SLKWKKYGQP (320 aa). ANK repeat units follow at residues 72–101, 110–139, 156–185, 189–222, and 232–261; these read LGET…YLVT, VGQT…SASA, YGEH…DIRA, LGNT…GDHL, and QGLT…HIQW. The helical transmembrane segment at 321-341 threads the bilayer; that stretch reads YFCLLGMLYIFYMICFTTCCV. At 342 to 378 the chain is on the extracellular side; it reads YRPLKFRDANRTHVRDNTVLEQKPLQEAYVTYQDKVR. N-linked (GlcNAc...) asparagine glycosylation is present at Asn-351. A helical membrane pass occupies residues 379–401; the sequence is LVGELVTVIGAVVILLIEIPDIF. The Cytoplasmic segment spans residues 402–412; that stretch reads RVGASRYFGHT. Residues 413–435 traverse the membrane as a helical segment; it reads VLGGPFHVIIITYASLVLLIMVM. At 436-441 the chain is on the extracellular side; the sequence is RLTSMN. The chain crosses the membrane as a helical span at residues 442 to 462; it reads GEVVPISMALVLGWCSVMYFS. Residues 463–485 are Cytoplasmic-facing; the sequence is RGFQMLGPFTIMIQKMIFGDLLR. Residues 486–506 traverse the membrane as a helical segment; sequence FCWLMAMVILGFASAFYIIFQ. Residues 517–537 constitute an intramembrane region (pore-forming); it reads SDYPTAMFSTFELFLTIIDGP. Asp-535 provides a ligand contact to Ca(2+). The helical transmembrane segment at 550–570 threads the bilayer; sequence LTYFAFAIIATLLMLNLFIAM. The Cytoplasmic segment spans residues 571–723; it reads MGDTHWRVAQ…EGDGEEIYHF (153 aa). Positions 591-595 are interaction with S100A10; that stretch reads VATTV. An involved in Ca(2+)-dependent inactivation region spans residues 643-646; sequence AFKS. Positions 651–674 are disordered; that stretch reads EVQEQLSEKQPSGTETGTLARGSV. Over residues 654–667 the composition is skewed to polar residues; sequence EQLSEKQPSGTETG. Position 678 is a phosphothreonine (Thr-678). A Phosphoserine modification is found at Ser-682. Positions 693 to 723 are involved in Ca(2+)-dependent inactivation; sequence RGWEILRRNTLGHLNLGQDLGEGDGEEIYHF.

This sequence belongs to the transient receptor (TC 1.A.4) family. TrpV subfamily. TRPV5 sub-subfamily. In terms of assembly, homotetramer and probably heterotetramer with TRPV6. Interacts with TRPV6. Interacts with S100A10 and probably with the ANAX2-S100A10 heterotetramer. The interaction with S100A10 is required for the trafficking to the plasma membrane. Interacts with calmodulin. Interacts with BSPRY, which results in its inactivation. Post-translationally, glycosylated. In terms of tissue distribution, detected in kidney (at protein level). Detected in kidney.

Its subcellular location is the cell membrane. It localises to the apical cell membrane. It carries out the reaction Ca(2+)(in) = Ca(2+)(out). Its activity is regulated as follows. Activated by WNK3. Its function is as follows. Constitutively active calcium selective cation channel thought to be involved in Ca(2+) reabsorption in kidney and intestine. Required for normal Ca(2+) reabsorption in the kidney distal convoluted tubules. The channel is activated by low internal calcium level and the current exhibits an inward rectification. A Ca(2+)-dependent feedback regulation includes fast channel inactivation and slow current decay. Heteromeric assembly with TRPV6 seems to modify channel properties. TRPV5-TRPV6 heteromultimeric concatemers exhibit voltage-dependent gating. This Rattus norvegicus (Rat) protein is Transient receptor potential cation channel subfamily V member 5 (Trpv5).